A 218-amino-acid polypeptide reads, in one-letter code: uncharacterized protein (218 aa).

Positions 4-83 constitute an ACT domain; it reads GISIEAENKV…IHSSLKKIYG (80 aa).

This is an uncharacterized protein from Methanocaldococcus jannaschii (strain ATCC 43067 / DSM 2661 / JAL-1 / JCM 10045 / NBRC 100440) (Methanococcus jannaschii).